We begin with the raw amino-acid sequence, 172 residues long: 3-hydroxydecanoyl-[acyl-carrier-protein] dehydratase (172 aa).

His-71 is a catalytic residue.

Belongs to the thioester dehydratase family. FabA subfamily. In terms of assembly, homodimer.

It is found in the cytoplasm. It catalyses the reaction a (3R)-hydroxyacyl-[ACP] = a (2E)-enoyl-[ACP] + H2O. The catalysed reaction is (3R)-hydroxydecanoyl-[ACP] = (2E)-decenoyl-[ACP] + H2O. The enzyme catalyses (2E)-decenoyl-[ACP] = (3Z)-decenoyl-[ACP]. It functions in the pathway lipid metabolism; fatty acid biosynthesis. Necessary for the introduction of cis unsaturation into fatty acids. Catalyzes the dehydration of (3R)-3-hydroxydecanoyl-ACP to E-(2)-decenoyl-ACP and then its isomerization to Z-(3)-decenoyl-ACP. Can catalyze the dehydratase reaction for beta-hydroxyacyl-ACPs with saturated chain lengths up to 16:0, being most active on intermediate chain length. The chain is 3-hydroxydecanoyl-[acyl-carrier-protein] dehydratase from Blochmanniella pennsylvanica (strain BPEN).